The primary structure comprises 107 residues: Putative double-stranded DNA mimic protein ETA_15890 (107 aa).

The protein belongs to the putative dsDNA mimic protein family.

May act as a double-stranded DNA (dsDNA) mimic. Probably regulates the activity of a dsDNA-binding protein. This Erwinia tasmaniensis (strain DSM 17950 / CFBP 7177 / CIP 109463 / NCPPB 4357 / Et1/99) protein is Putative double-stranded DNA mimic protein ETA_15890.